A 320-amino-acid chain; its full sequence is Histidine decarboxylase proenzyme (320 aa).

Positions 2-11 (NKNLEANRNR) are excised as a propeptide. Serine 98 carries the pyruvic acid (Ser) modification. Glutamate 215 (proton donor) is an active-site residue.

The proenzyme is a hexamer of identical pi chains; each pi chain monomer is cleaved to form a small (or beta) chain and a large (or alpha) chain by non-hydrolytic self-catalysis. Requires pyruvate as cofactor.

It carries out the reaction L-histidine + H(+) = histamine + CO2. In Clostridium perfringens (strain 13 / Type A), this protein is Histidine decarboxylase proenzyme (hdc).